The following is a 286-amino-acid chain: Putative electron transfer flavoprotein subunit YgcQ (286 aa).

Position 225 to 253 (225 to 253) interacts with FAD; that stretch reads VCIVVGASGAAALMAGVRNSKFVVAINHD.

Belongs to the ETF alpha-subunit/FixB family. In terms of assembly, ygcQ and YgcR form a heterodimer.

May play a role in a redox process. This is Putative electron transfer flavoprotein subunit YgcQ (ygcQ) from Escherichia coli (strain K12).